The following is a 433-amino-acid chain: Enolase (433 aa).

Q163 lines the (2R)-2-phosphoglycerate pocket. E205 serves as the catalytic Proton donor. Mg(2+)-binding residues include D241, E289, and D316. Positions 341, 370, 371, and 392 each coordinate (2R)-2-phosphoglycerate. Residue K341 is the Proton acceptor of the active site.

This sequence belongs to the enolase family. Requires Mg(2+) as cofactor.

It is found in the cytoplasm. The protein resides in the secreted. It localises to the cell surface. It carries out the reaction (2R)-2-phosphoglycerate = phosphoenolpyruvate + H2O. It functions in the pathway carbohydrate degradation; glycolysis; pyruvate from D-glyceraldehyde 3-phosphate: step 4/5. Its function is as follows. Catalyzes the reversible conversion of 2-phosphoglycerate (2-PG) into phosphoenolpyruvate (PEP). It is essential for the degradation of carbohydrates via glycolysis. The sequence is that of Enolase from Treponema denticola (strain ATCC 35405 / DSM 14222 / CIP 103919 / JCM 8153 / KCTC 15104).